Here is a 626-residue protein sequence, read N- to C-terminus: Protein MICRORCHIDIA 2 (626 aa).

The stretch at 579-626 (MRCEEYIKKENETEQTVKSLEKELEEFKSKCAHLALLVDAKKKEMQQA) forms a coiled coil.

It belongs to the MORC ATPase protein family. Homodimer and heterodimer with MORC6. Component of an RNA-directed DNA methylation (RdDM) complex that contains at least MORC6, MORC1/CRT1, MORC2, SWI3D and SUVH9. Binds directly to SUVH9. Mg(2+) serves as cofactor. It depends on Mn(2+) as a cofactor.

It is found in the nucleus. Its subcellular location is the endosome. Its function is as follows. Mediator of defense signaling triggered by distinct classes of R proteins. Required during hypersensitive response (HR) that confers disease resistance to turnip crinkle virus (TCV). Contributes to resistance against Pseudomonas syringae and Hyaloperonospora arabidopsidis, at early stages prior to cytosolic calcium ions Ca(2+) accumulation. Required for pathogen-associated molecular pattern (PAMP)-triggered immunity, basal resistance, non-host resistance and systemic acquired resistance (SAR). Involved in RNA-directed DNA methylation (RdDM) as a component of the RdDM machinery and required for gene silencing. May also be involved in the regulation of chromatin architecture to maintain gene silencing. Exhibits ATPase activity. The chain is Protein MICRORCHIDIA 2 from Arabidopsis thaliana (Mouse-ear cress).